Reading from the N-terminus, the 232-residue chain is Proteasome subunit alpha (232 aa).

This sequence belongs to the peptidase T1A family. The 20S proteasome core is composed of 14 alpha and 14 beta subunits that assemble into four stacked heptameric rings, resulting in a barrel-shaped structure. The two inner rings, each composed of seven catalytic beta subunits, are sandwiched by two outer rings, each composed of seven alpha subunits. The catalytic chamber with the active sites is on the inside of the barrel. Has a gated structure, the ends of the cylinder being occluded by the N-termini of the alpha-subunits. Is capped by the proteasome-associated ATPase, ARC.

The protein localises to the cytoplasm. It participates in protein degradation; proteasomal Pup-dependent pathway. With respect to regulation, the formation of the proteasomal ATPase ARC-20S proteasome complex, likely via the docking of the C-termini of ARC into the intersubunit pockets in the alpha-rings, may trigger opening of the gate for substrate entry. Interconversion between the open-gate and close-gate conformations leads to a dynamic regulation of the 20S proteasome proteolysis activity. Its function is as follows. Component of the proteasome core, a large protease complex with broad specificity involved in protein degradation. In Acidimicrobium ferrooxidans (strain DSM 10331 / JCM 15462 / NBRC 103882 / ICP), this protein is Proteasome subunit alpha.